Here is a 264-residue protein sequence, read N- to C-terminus: S-adenosylmethionine decarboxylase proenzyme (264 aa).

Ser112 (schiff-base intermediate with substrate; via pyruvic acid) is an active-site residue. Ser112 is subject to Pyruvic acid (Ser); by autocatalysis. Residue His117 is the Proton acceptor; for processing activity of the active site. Cys140 functions as the Proton donor; for catalytic activity in the catalytic mechanism.

The protein belongs to the prokaryotic AdoMetDC family. Type 2 subfamily. As to quaternary structure, heterooctamer of four alpha and four beta chains arranged as a tetramer of alpha/beta heterodimers. Pyruvate serves as cofactor. In terms of processing, is synthesized initially as an inactive proenzyme. Formation of the active enzyme involves a self-maturation process in which the active site pyruvoyl group is generated from an internal serine residue via an autocatalytic post-translational modification. Two non-identical subunits are generated from the proenzyme in this reaction, and the pyruvate is formed at the N-terminus of the alpha chain, which is derived from the carboxyl end of the proenzyme. The post-translation cleavage follows an unusual pathway, termed non-hydrolytic serinolysis, in which the side chain hydroxyl group of the serine supplies its oxygen atom to form the C-terminus of the beta chain, while the remainder of the serine residue undergoes an oxidative deamination to produce ammonia and the pyruvoyl group blocking the N-terminus of the alpha chain.

The catalysed reaction is S-adenosyl-L-methionine + H(+) = S-adenosyl 3-(methylsulfanyl)propylamine + CO2. It functions in the pathway amine and polyamine biosynthesis; S-adenosylmethioninamine biosynthesis; S-adenosylmethioninamine from S-adenosyl-L-methionine: step 1/1. Catalyzes the decarboxylation of S-adenosylmethionine to S-adenosylmethioninamine (dcAdoMet), the propylamine donor required for the synthesis of the polyamines spermine and spermidine from the diamine putrescine. The chain is S-adenosylmethionine decarboxylase proenzyme from Citrobacter koseri (strain ATCC BAA-895 / CDC 4225-83 / SGSC4696).